The following is a 120-amino-acid chain: MSETPDDLDELRQQRMEELRDQADGQQSQTSDNTAAAQEAAREKAEAQQEALLKQHLTDGARQRLNAIEMSKPDFAEKVKKQLVTLAQSGRIQDRIDEDQMRELLQELKPDSKSYNIRRR.

The tract at residues Met-1 to Gln-55 is disordered. Positions Glu-10 to Ala-23 are enriched in basic and acidic residues. Residues Asp-24–Thr-34 show a composition bias toward polar residues.

It belongs to the PDCD5 family.

This Haloquadratum walsbyi (strain DSM 16790 / HBSQ001) protein is DNA-binding protein HQ_1105A.